A 167-amino-acid chain; its full sequence is Protein YfbM (167 aa).

In terms of assembly, monomer.

This Escherichia coli (strain K12) protein is Protein YfbM (yfbM).